A 29-amino-acid chain; its full sequence is Cycloviolacin-O21 (29 aa).

Positions 1-29 form a cross-link, cyclopeptide (Gly-Asn); sequence GLPVCGETCVTGSCYTPGCTCSWPVCTRN. 3 disulfides stabilise this stretch: C5/C19, C9/C21, and C14/C26.

Post-translationally, this is a cyclic peptide. Expressed in leaves, petals, petioles, and runners but not in roots (at protein level).

Functionally, probably participates in a plant defense mechanism. This is Cycloviolacin-O21 from Viola odorata (Sweet violet).